The chain runs to 43 residues: Protein PsbN (43 aa).

Residues 5–27 (TLVAIFISCLLVSFTGYAPYTAS) form a helical membrane-spanning segment.

Belongs to the PsbN family.

It is found in the plastid. It localises to the chloroplast thylakoid membrane. Its function is as follows. May play a role in photosystem I and II biogenesis. The chain is Protein PsbN from Anthoceros angustus (Hornwort).